The primary structure comprises 40 residues: U2-myrmicitoxin-Tb1a (40 aa).

A signal peptide spans 1-3 (AEA). Positions 4 to 29 (MAEAMADAMADAMADAMADAMAEAAA) are excised as a propeptide. Residue arginine 39 is modified to Arginine amide.

This sequence belongs to the formicidae venom precursor-01 superfamily. As to expression, expressed by the venom gland.

Its subcellular location is the secreted. Its function is as follows. Venom protein with unknown function. Does not induce paralysis when a high dose is administered by intrathoracic injection into the blowfly Lucilia caesar. The chain is U2-myrmicitoxin-Tb1a from Tetramorium bicarinatum (Tramp ant).